The following is a 326-amino-acid chain: MFSQTVSVAVTGGTGQIAYCFLFALAHGDIFGPDTGIDLRIYDIPGTERSLSGVRMELDDGAFPLLQRVQVTTSLHDAFDDIDAAFLIGSVPRGPGMERRDLLKKNGEIFATQGKVLNTAAKREAKIFVVGNPVNTNCWIAMNHAPRLLRKNFHAMLRLDQNRMHSMLAHRAEVPLSAVSQVVVWGNHSAKQVPDFTQALIHGRPIVETIADRDWLENIMVPSVQSRGSAVIEARGKSSAASAARALAEAARSIYQPKEGEWFSSGVCSDNNPYGLPEDIIFGFPCRMLGTGEYEIVPGLPWDAFIRGKMQISLDEILQEKASVSL.

Position 12 to 18 (12 to 18 (GGTGQIA)) interacts with NAD(+). Substrate-binding residues include Arg-93 and Arg-99. NAD(+) contacts are provided by residues Asn-106, Gln-113, and 130–132 (VGN). Residues Asn-132 and Arg-163 each contribute to the substrate site. His-188 acts as the Proton acceptor in catalysis.

It belongs to the LDH/MDH superfamily. MDH type 2 family.

It carries out the reaction (S)-malate + NAD(+) = oxaloacetate + NADH + H(+). Catalyzes the reversible oxidation of malate to oxaloacetate. The protein is Malate dehydrogenase of Chlamydia muridarum (strain MoPn / Nigg).